The chain runs to 57 residues: DNA-directed RNA polymerase subunit Rpo6 (57 aa).

It belongs to the archaeal Rpo6/eukaryotic RPB6 RNA polymerase subunit family. In terms of assembly, part of the RNA polymerase complex.

The protein resides in the cytoplasm. It carries out the reaction RNA(n) + a ribonucleoside 5'-triphosphate = RNA(n+1) + diphosphate. In terms of biological role, DNA-dependent RNA polymerase (RNAP) catalyzes the transcription of DNA into RNA using the four ribonucleoside triphosphates as substrates. In Thermococcus onnurineus (strain NA1), this protein is DNA-directed RNA polymerase subunit Rpo6.